The chain runs to 1203 residues: DNA-directed RNA polymerase subunit beta' (1203 aa).

The Zn(2+) site is built by Cys-60, Cys-62, Cys-75, and Cys-78. Positions 449, 451, and 453 each coordinate Mg(2+). The Zn(2+) site is built by Cys-818, Cys-892, Cys-899, and Cys-902.

It belongs to the RNA polymerase beta' chain family. In terms of assembly, the RNAP catalytic core consists of 2 alpha, 1 beta, 1 beta' and 1 omega subunit. When a sigma factor is associated with the core the holoenzyme is formed, which can initiate transcription. Mg(2+) is required as a cofactor. Requires Zn(2+) as cofactor.

The catalysed reaction is RNA(n) + a ribonucleoside 5'-triphosphate = RNA(n+1) + diphosphate. DNA-dependent RNA polymerase catalyzes the transcription of DNA into RNA using the four ribonucleoside triphosphates as substrates. The sequence is that of DNA-directed RNA polymerase subunit beta' from Bacillus thuringiensis (strain Al Hakam).